The following is a 310-amino-acid chain: tRNA-cytidine(32) 2-sulfurtransferase (310 aa).

Residues 45–50 (SGGKDS) carry the PP-loop motif motif. Residues Cys-120, Cys-123, and Cys-211 each coordinate [4Fe-4S] cluster.

This sequence belongs to the TtcA family. Homodimer. Requires Mg(2+) as cofactor. [4Fe-4S] cluster serves as cofactor.

The protein resides in the cytoplasm. It carries out the reaction cytidine(32) in tRNA + S-sulfanyl-L-cysteinyl-[cysteine desulfurase] + AH2 + ATP = 2-thiocytidine(32) in tRNA + L-cysteinyl-[cysteine desulfurase] + A + AMP + diphosphate + H(+). Its pathway is tRNA modification. Its function is as follows. Catalyzes the ATP-dependent 2-thiolation of cytidine in position 32 of tRNA, to form 2-thiocytidine (s(2)C32). The sulfur atoms are provided by the cysteine/cysteine desulfurase (IscS) system. This chain is tRNA-cytidine(32) 2-sulfurtransferase, found in Shewanella baltica (strain OS195).